A 57-amino-acid chain; its full sequence is Large ribosomal subunit protein bL32 (57 aa).

The protein belongs to the bacterial ribosomal protein bL32 family.

This chain is Large ribosomal subunit protein bL32, found in Staphylococcus saprophyticus subsp. saprophyticus (strain ATCC 15305 / DSM 20229 / NCIMB 8711 / NCTC 7292 / S-41).